The sequence spans 421 residues: BEN domain-containing protein 5 (421 aa).

Position 133 is an N6-acetyllysine (lysine 133). A coiled-coil region spans residues 180 to 243 (RALYEELLRN…LNRRLQDVLL (64 aa)). Residue lysine 258 forms a Glycyl lysine isopeptide (Lys-Gly) (interchain with G-Cter in SUMO2) linkage. A BEN domain is found at 302 to 408 (GSGIWVDEEK…EKIMDINKSC (107 aa)).

Acts as a transcriptional repressor. The chain is BEN domain-containing protein 5 (Bend5) from Mus musculus (Mouse).